Here is a 155-residue protein sequence, read N- to C-terminus: 3-dehydroquinate dehydratase 1 (155 aa).

The active-site Proton acceptor is the tyrosine 28. Substrate-binding residues include asparagine 80, histidine 86, and aspartate 93. The active-site Proton donor is histidine 106. Substrate-binding positions include 107–108 (VT) and arginine 117.

Belongs to the type-II 3-dehydroquinase family. In terms of assembly, homododecamer.

The enzyme catalyses 3-dehydroquinate = 3-dehydroshikimate + H2O. Its pathway is metabolic intermediate biosynthesis; chorismate biosynthesis; chorismate from D-erythrose 4-phosphate and phosphoenolpyruvate: step 3/7. In terms of biological role, catalyzes a trans-dehydration via an enolate intermediate. This Bradyrhizobium diazoefficiens (strain JCM 10833 / BCRC 13528 / IAM 13628 / NBRC 14792 / USDA 110) protein is 3-dehydroquinate dehydratase 1 (aroQ1).